The sequence spans 1501 residues: MGNTLDSNKPKNFVTYADYKYIGKLNNKNEHHGIGIILYNSGESFYGSFINGKKEGKGIYIDKNLTRYINTWVDNKVFGKVKVVPYNSNRVYYFYYKNYMIEKCIYFDNNINNKESHHKNNIYNNYDNNSYNNNSCDDEEKRKYPIGVTKFKEDLSNYIHSTHIMKKNNKLFNKNDNEYNIFSSSLSYSSDSENINLLDILKKKKNKKNKKNKKKKNKKTKNTQILSCTQHKMYEHNMNESNFTKKDNVNCEHTDKMNISLHEKNDKKNEKKNEKKNKKKKLFKYFSNNIENLIIENYQTWSLREVIQWLMLCNVPVKWLISFYKNNITGDKLKYININTIRNELGIIAYGHAIKILQLIKNLQVMAYNKKFNNLIQIEEYKNYIRQKENTNKNIKKGKNIKKEKKKKKEKNIKKEKKKKKKETKKFNNMDKKYIDLAIHKNVKNIQNDTFYNKHENIYNCKNQTNFIYQNDSEIKKIMNKKKVSFEYDNNEEKKKKNIIKFIKNNKSLQNSNGEYYLINHLSKGICSDSIFYKSSQSKSSSQLSSPLSSPLSSPSPSSSPSSSPSSSPSSSPSSSPSPSSSPSPSSSPSSSPSSSPSSPPSPLSYKDNFPISSSCSSLERLPSYEKKLLSSSQSNIEHIKNLPLDVLSNNNSSANIKIKKSKSKYNNDKKEQKKLPLILNKSSSEFSPSHSYTSKSYHYNIKPSLQSSSNNSSDSSYSISSTCSSSSSYVSSLYSNRSNDILNFYRNKIIKYCNNIYMNTKLAYSYMNGFIIPHEDLIFIHPIENYYMDNTNEKNNINNPYTKEKIMNHNFSFNTKNNTSFIDINTNIFSSNKQQNINNFGKYKKMKSRMFKGKYMGKEVAIKILVGKIKNFKKLHQILYNLYNLRHSNLVLIMGVSIHYPFVFIIYEYMKNKCLFSYLHCIKYKHVYISTFLQRYKTLLHITQQEKIKKTNNINNNNNINHNNINNNNINHNNINHNNINNNNINNNNINYNKDYNNKKKKEDEQHNIEHQDTFIDLPEKSNISSDDNNSTDISQIQKENFHFLNKKIEENKNIIYDDHTSTLSDHSIHNINKSYDNVYKNKMNIFHYQHNVLCGAYDNNDNNINDNDIYCNNIYDNNINDNHIYCNNINDNHIYCNNINDNHIYCNNIYDHHKNTSLNSKEQNTDHNIEQINECNKYASETKYNIKKSNLKNNIISHKNFQKCNQIQMNQPYTFPPYQKELSSYLKNEKIKRKRKVLFSYLKTHIHFNSQQINDQHNRLSVQKIMKIITDVTLACTYLEKEKMSPINLKPTNILLDESLNAKISDFGISKIENCLDMNIDYSYKISSNSVIKINKKEYEQKKAKKIKIVNKNNNDLLYLYDHNNNVYKYNTQYIDVTYNNSYPSIFYWTPPEILRGKKNKKFYSDIYAFGIILWEMLSNDIPYNYPFASHIMAVVGYANEELSFNNIPVSIQSLIKACVNRNKYKRPTFEHILKTISTLYQKANTKVEDALISFMDGT.

Asn64, Asn128, and Asn133 each carry an N-linked (GlcNAc...) asparagine glycan. Positions 204–221 (KKNKKNKKNKKKKNKKTK) are enriched in basic residues. The interval 204 to 223 (KKNKKNKKNKKKKNKKTKNT) is disordered. Asn239, Asn242, Asn258, and Asn327 each carry an N-linked (GlcNAc...) asparagine glycan. Residues 257–273 (MNISLHEKNDKKNEKKN) are compositionally biased toward basic and acidic residues. Residues 257–276 (MNISLHEKNDKKNEKKNEKK) form a disordered region. The 66-residue stretch at 301-366 (WSLREVIQWL…LQLIKNLQVM (66 aa)) folds into the SAM domain. A disordered region spans residues 392-425 (NKNIKKGKNIKKEKKKKKEKNIKKEKKKKKKETK). Positions 394–424 (NIKKGKNIKKEKKKKKEKNIKKEKKKKKKET) are enriched in basic residues. Positions 399-433 (KNIKKEKKKKKEKNIKKEKKKKKKETKKFNNMDKK) form a coiled coil. Residues Asn448, Asn463, and Asn471 are each glycosylated (N-linked (GlcNAc...) asparagine). Residues 483 to 486 (KVSF) carry the RVxF motif 1 motif. The N-linked (GlcNAc...) asparagine glycan is linked to Asn506. Residues 543 to 597 (QLSSPLSSPLSSPSPSSSPSSSPSSSPSSSPSSSPSPSSSPSPSSSPSSSPSSSP) show a composition bias toward low complexity. The interval 543-607 (QLSSPLSSPL…SSPPSPLSYK (65 aa)) is disordered. A glycan (N-linked (GlcNAc...) asparagine) is linked at Asn652. Positions 659-678 (IKKSKSKYNNDKKEQKKLPL) are disordered. The segment covering 666 to 675 (YNNDKKEQKK) has biased composition (basic and acidic residues). 5 N-linked (GlcNAc...) asparagine glycosylation sites follow: Asn681, Asn712, Asn737, Asn811, and Asn819. Residues 836 to 844 (QNINNFGKY) and Lys864 each bind ATP. N-linked (GlcNAc...) asparagine glycans are attached at residues Asn1024, Asn1031, Asn1074, and Asn1157. Positions 1088 to 1483 (FHYQHNVLCG…HILKTISTLY (396 aa)) constitute a Protein kinase domain. Positions 1238 to 1241 (KVLF) match the RVxF motif 2 motif. The N-linked (GlcNAc...) asparagine glycan is linked to Asn1382.

Belongs to the protein kinase superfamily. TKL Ser/Thr protein kinase family. As to quaternary structure, interacts (via RVxF motif 1 and/or 2) with phosphatase PP1C. May interact (via SAM domain) with SERA5 (via C-terminus).

Its subcellular location is the parasitophorous vacuole. The protein resides in the host cell membrane. It is found in the host cytoplasm. The protein localises to the host cytoskeleton. The chain is Inactive protein tyrosine kinase pTKL from Plasmodium falciparum (isolate 3D7).